We begin with the raw amino-acid sequence, 162 residues long: MEITMTTAYYRHKYCPDTSYLRPKYIYIPKTPVRKFFESLIPPQIIDSEKWTDLHLAVGYKNIKLVQSVCNKHNINIKDAKGRTALELAILGDNLEIVQFLVQNGGVVAPNNMYGWSAIHLAIKVGNLDIVKYLYENTKFNEHDKYGLTLQNWAEKVGNEQI.

3 ANK repeats span residues 49–77, 81–110, and 114–145; these read EKWTDLHLAVGYKNIKLVQSVCNKHNINI, KGRTALELAILGDNLEIVQFLVQNGGVVAP, and YGWSAIHLAIKVGNLDIVKYLYENTKFNEHDK.

The chain is Putative ankyrin repeat protein RBE_0151 from Rickettsia bellii (strain RML369-C).